Here is a 149-residue protein sequence, read N- to C-terminus: Urease accessory protein UreE (149 aa).

The protein belongs to the UreE family.

It localises to the cytoplasm. Its function is as follows. Involved in urease metallocenter assembly. Binds nickel. Probably functions as a nickel donor during metallocenter assembly. The polypeptide is Urease accessory protein UreE (Ureaplasma parvum serovar 3 (strain ATCC 700970)).